Consider the following 561-residue polypeptide: uncharacterized protein (561 aa).

Residues 1 to 24 (MELGAWRSILYIAFLFAITRHAFC) form the signal peptide. Residues 25-509 (KAVNLVHSPE…GYVYLSEIKQ (485 aa)) are Lumenal-facing. The chain crosses the membrane as a helical span at residues 510–530 (YSSLILISLWISLILFVSFLN). Topologically, residues 531 to 561 (RRLILHYSFESVHQLKTLTRKFIYSSLLKQD) are cytoplasmic.

The protein resides in the endoplasmic reticulum membrane. It localises to the golgi apparatus membrane. This is an uncharacterized protein from Schizosaccharomyces pombe (strain 972 / ATCC 24843) (Fission yeast).